Here is an 80-residue protein sequence, read N- to C-terminus: ATP synthase subunit c (80 aa).

Helical transmembrane passes span 11–31 (IAAA…IGIL) and 53–73 (FFIV…LGLY).

Belongs to the ATPase C chain family. As to quaternary structure, F-type ATPases have 2 components, F(1) - the catalytic core - and F(0) - the membrane proton channel. F(1) has five subunits: alpha(3), beta(3), gamma(1), delta(1), epsilon(1). F(0) has three main subunits: a(1), b(2) and c(10-14). The alpha and beta chains form an alternating ring which encloses part of the gamma chain. F(1) is attached to F(0) by a central stalk formed by the gamma and epsilon chains, while a peripheral stalk is formed by the delta and b chains.

The protein resides in the cell inner membrane. Functionally, f(1)F(0) ATP synthase produces ATP from ADP in the presence of a proton or sodium gradient. F-type ATPases consist of two structural domains, F(1) containing the extramembraneous catalytic core and F(0) containing the membrane proton channel, linked together by a central stalk and a peripheral stalk. During catalysis, ATP synthesis in the catalytic domain of F(1) is coupled via a rotary mechanism of the central stalk subunits to proton translocation. Its function is as follows. Key component of the F(0) channel; it plays a direct role in translocation across the membrane. A homomeric c-ring of between 10-14 subunits forms the central stalk rotor element with the F(1) delta and epsilon subunits. This is ATP synthase subunit c from Aeromonas hydrophila subsp. hydrophila (strain ATCC 7966 / DSM 30187 / BCRC 13018 / CCUG 14551 / JCM 1027 / KCTC 2358 / NCIMB 9240 / NCTC 8049).